We begin with the raw amino-acid sequence, 292 residues long: 4-amino-L-phenylalanine/4-methylamino-L-phenylalanine methyltransferase (292 aa).

128 to 132 contacts S-adenosyl-L-methionine; sequence CAGPG.

It belongs to the protein N5-glutamine methyltransferase family.

It catalyses the reaction 4-amino-L-phenylalanine + S-adenosyl-L-methionine = 4-methylamino-L-phenylalanine + S-adenosyl-L-homocysteine + H(+). The catalysed reaction is 4-methylamino-L-phenylalanine + S-adenosyl-L-methionine = 4-dimethylamino-L-phenylalanine + S-adenosyl-L-homocysteine + H(+). Its pathway is antibiotic biosynthesis. Its function is as follows. Involved in pristinamycin I biosynthesis. Catalyzes the SAM-dependent methylation of 4-amino-L-phenylalanine (PAPA) to 4-methylamino-L-phenylalanine (MMPAPA), and of MMPAPA to 4-dimethylamino-L-phenylalanine (DMPAPA). This Streptomyces pristinaespiralis protein is 4-amino-L-phenylalanine/4-methylamino-L-phenylalanine methyltransferase.